We begin with the raw amino-acid sequence, 316 residues long: HTH-type transcriptional regulator cbl (316 aa).

The HTH lysR-type domain maps to 1–59 (MNFQQLKIIREAARQDYNLTEVANMLYTSQSGVSRHIRELEEELGIEIFIRRGKRLLGM). A DNA-binding region (H-T-H motif) is located at residues 19 to 38 (LTEVANMLYTSQSGVSRHIR).

The protein belongs to the LysR transcriptional regulatory family.

In terms of biological role, may be an accessory regulatory protein within the cys regulon. The protein is HTH-type transcriptional regulator cbl (cbl) of Klebsiella aerogenes (Enterobacter aerogenes).